We begin with the raw amino-acid sequence, 136 residues long: Small ribosomal subunit protein uS9 (136 aa).

Positions 97–136 (SPDNRKPLKTEGHLSRDPRAKERRKYGLKKARKAPQFSKR) are disordered. Residues 98 to 116 (PDNRKPLKTEGHLSRDPRA) are compositionally biased toward basic and acidic residues. A compositionally biased stretch (basic residues) spans 117–136 (KERRKYGLKKARKAPQFSKR).

This sequence belongs to the universal ribosomal protein uS9 family.

The polypeptide is Small ribosomal subunit protein uS9 (Prochlorococcus marinus (strain MIT 9301)).